The chain runs to 514 residues: Membrane-bound lytic murein transglycosylase F (514 aa).

The signal sequence occupies residues 1-30; sequence MLSNNPLITKFRELFTVALVLALLSGCQWQ. The tract at residues 31-271 is non-LT domain; that stretch reads DDNLTDLEKI…QLEEKYFGHV (241 aa). Residues 272–514 are LT domain; it reads GSFDYVDTRA…KTIEDPGPSQ (243 aa). Glutamate 316 is a catalytic residue. A disordered region spans residues 482-514; that stretch reads PVPPRQANVDGSLNNEAAISSAEKTIEDPGPSQ. The span at 490–499 shows a compositional bias: polar residues; it reads VDGSLNNEAA.

It in the N-terminal section; belongs to the bacterial solute-binding protein 3 family. This sequence in the C-terminal section; belongs to the transglycosylase Slt family.

Its subcellular location is the cell outer membrane. It carries out the reaction Exolytic cleavage of the (1-&gt;4)-beta-glycosidic linkage between N-acetylmuramic acid (MurNAc) and N-acetylglucosamine (GlcNAc) residues in peptidoglycan, from either the reducing or the non-reducing ends of the peptidoglycan chains, with concomitant formation of a 1,6-anhydrobond in the MurNAc residue.. Its function is as follows. Murein-degrading enzyme that degrades murein glycan strands and insoluble, high-molecular weight murein sacculi, with the concomitant formation of a 1,6-anhydromuramoyl product. Lytic transglycosylases (LTs) play an integral role in the metabolism of the peptidoglycan (PG) sacculus. Their lytic action creates space within the PG sacculus to allow for its expansion as well as for the insertion of various structures such as secretion systems and flagella. The sequence is that of Membrane-bound lytic murein transglycosylase F from Photobacterium profundum (strain SS9).